Reading from the N-terminus, the 264-residue chain is 5'-nucleotidase SurE (264 aa).

A divalent metal cation contacts are provided by Asp10, Asp11, Ser43, and Asn99.

This sequence belongs to the SurE nucleotidase family. A divalent metal cation serves as cofactor.

The protein localises to the cytoplasm. The enzyme catalyses a ribonucleoside 5'-phosphate + H2O = a ribonucleoside + phosphate. Functionally, nucleotidase that shows phosphatase activity on nucleoside 5'-monophosphates. This chain is 5'-nucleotidase SurE, found in Methanococcus maripaludis (strain C5 / ATCC BAA-1333).